Reading from the N-terminus, the 436-residue chain is UPF0597 protein YhaM (436 aa).

It belongs to the UPF0597 family.

The sequence is that of UPF0597 protein YhaM from Salmonella dublin (strain CT_02021853).